The primary structure comprises 168 residues: Calcium-binding protein 2 (168 aa).

EF-hand domains are found at residues 13 to 48 (GMEK…AGKK), 48 to 83 (KNPE…MNDE), 88 to 123 (VLNW…QGAE), and 124 to 159 (DPEL…KKFS). Residues Asp-26, Asp-28, Asn-30, Lys-32, Glu-37, Asp-61, Asp-63, Asn-65, Glu-67, Glu-72, Asp-101, Asp-103, Asp-105, Lys-107, Glu-112, Asp-137, Asp-139, Asp-141, and Glu-148 each coordinate Ca(2+).

Not known; probably binds four calcium ions. The sequence is that of Calcium-binding protein 2 (cbp2) from Dictyostelium discoideum (Social amoeba).